Reading from the N-terminus, the 457-residue chain is Siroheme synthase (457 aa).

The segment at 1–204 (MDHLPIFCQL…NDQKAITETT (204 aa)) is precorrin-2 dehydrogenase /sirohydrochlorin ferrochelatase. NAD(+)-binding positions include 22–23 (DV) and 43–44 (LA). Phosphoserine is present on S128. Residues 216–457 (GEVVLVGAGP…RDKLNWFSNH (242 aa)) form a uroporphyrinogen-III C-methyltransferase region. P225 provides a ligand contact to S-adenosyl-L-methionine. Catalysis depends on D248, which acts as the Proton acceptor. Residue K270 is the Proton donor of the active site. S-adenosyl-L-methionine is bound by residues 301–303 (GGD), I306, 331–332 (TA), M382, and G411.

This sequence in the N-terminal section; belongs to the precorrin-2 dehydrogenase / sirohydrochlorin ferrochelatase family. The protein in the C-terminal section; belongs to the precorrin methyltransferase family.

It catalyses the reaction uroporphyrinogen III + 2 S-adenosyl-L-methionine = precorrin-2 + 2 S-adenosyl-L-homocysteine + H(+). The catalysed reaction is precorrin-2 + NAD(+) = sirohydrochlorin + NADH + 2 H(+). It carries out the reaction siroheme + 2 H(+) = sirohydrochlorin + Fe(2+). Its pathway is cofactor biosynthesis; adenosylcobalamin biosynthesis; precorrin-2 from uroporphyrinogen III: step 1/1. It functions in the pathway cofactor biosynthesis; adenosylcobalamin biosynthesis; sirohydrochlorin from precorrin-2: step 1/1. The protein operates within porphyrin-containing compound metabolism; siroheme biosynthesis; precorrin-2 from uroporphyrinogen III: step 1/1. It participates in porphyrin-containing compound metabolism; siroheme biosynthesis; siroheme from sirohydrochlorin: step 1/1. Its pathway is porphyrin-containing compound metabolism; siroheme biosynthesis; sirohydrochlorin from precorrin-2: step 1/1. In terms of biological role, multifunctional enzyme that catalyzes the SAM-dependent methylations of uroporphyrinogen III at position C-2 and C-7 to form precorrin-2 via precorrin-1. Then it catalyzes the NAD-dependent ring dehydrogenation of precorrin-2 to yield sirohydrochlorin. Finally, it catalyzes the ferrochelation of sirohydrochlorin to yield siroheme. This is Siroheme synthase from Escherichia coli O17:K52:H18 (strain UMN026 / ExPEC).